The chain runs to 142 residues: Small ribosomal subunit protein eS6 (142 aa).

A disordered region spans residues 117 to 142 (EKPLDELAPKKEKKEGAAGGRAPAKK). A compositionally biased stretch (basic and acidic residues) spans 118–132 (KPLDELAPKKEKKEG).

The protein belongs to the eukaryotic ribosomal protein eS6 family.

This chain is Small ribosomal subunit protein eS6, found in Methanocella arvoryzae (strain DSM 22066 / NBRC 105507 / MRE50).